Here is a 447-residue protein sequence, read N- to C-terminus: Ribulose bisphosphate carboxylase large chain (447 aa).

Position 5 is an N6,N6,N6-trimethyllysine (K5). The substrate site is built by N114 and T164. K166 (proton acceptor) is an active-site residue. A substrate-binding site is contributed by K168. Positions 192, 194, and 195 each coordinate Mg(2+). Residue K192 is modified to N6-carboxylysine. H285 functions as the Proton acceptor in the catalytic mechanism. 3 residues coordinate substrate: R286, H318, and S370.

It belongs to the RuBisCO large chain family. Type I subfamily. As to quaternary structure, heterohexadecamer of 8 large chains and 8 small chains; disulfide-linked. The disulfide link is formed within the large subunit homodimers. Mg(2+) is required as a cofactor. Post-translationally, the disulfide bond which can form in the large chain dimeric partners within the hexadecamer appears to be associated with oxidative stress and protein turnover.

Its subcellular location is the plastid. The protein localises to the chloroplast. The enzyme catalyses 2 (2R)-3-phosphoglycerate + 2 H(+) = D-ribulose 1,5-bisphosphate + CO2 + H2O. It catalyses the reaction D-ribulose 1,5-bisphosphate + O2 = 2-phosphoglycolate + (2R)-3-phosphoglycerate + 2 H(+). In terms of biological role, ruBisCO catalyzes two reactions: the carboxylation of D-ribulose 1,5-bisphosphate, the primary event in carbon dioxide fixation, as well as the oxidative fragmentation of the pentose substrate in the photorespiration process. Both reactions occur simultaneously and in competition at the same active site. This chain is Ribulose bisphosphate carboxylase large chain, found in Camassia leichtlinii (Western quamash).